Here is a 379-residue protein sequence, read N- to C-terminus: Carbamoyl phosphate synthase small chain (379 aa).

A CPSase region spans residues 1–189 (MSKSALLVLE…GLPEAKADSE (189 aa)). Residues Ser-47, Gly-241, and Gly-243 each coordinate L-glutamine. The region spanning 193–379 (HVVAYDFGAK…FIELIKQFRA (187 aa)) is the Glutamine amidotransferase type-1 domain. Residue Cys-269 is the Nucleophile of the active site. Leu-270, Gln-273, Asn-311, Gly-313, and Phe-314 together coordinate L-glutamine. Catalysis depends on residues His-353 and Glu-355.

Belongs to the CarA family. In terms of assembly, composed of two chains; the small (or glutamine) chain promotes the hydrolysis of glutamine to ammonia, which is used by the large (or ammonia) chain to synthesize carbamoyl phosphate. Tetramer of heterodimers (alpha,beta)4.

The enzyme catalyses hydrogencarbonate + L-glutamine + 2 ATP + H2O = carbamoyl phosphate + L-glutamate + 2 ADP + phosphate + 2 H(+). It carries out the reaction L-glutamine + H2O = L-glutamate + NH4(+). Its pathway is amino-acid biosynthesis; L-arginine biosynthesis; carbamoyl phosphate from bicarbonate: step 1/1. It functions in the pathway pyrimidine metabolism; UMP biosynthesis via de novo pathway; (S)-dihydroorotate from bicarbonate: step 1/3. In terms of biological role, small subunit of the glutamine-dependent carbamoyl phosphate synthetase (CPSase). CPSase catalyzes the formation of carbamoyl phosphate from the ammonia moiety of glutamine, carbonate, and phosphate donated by ATP, constituting the first step of 2 biosynthetic pathways, one leading to arginine and/or urea and the other to pyrimidine nucleotides. The small subunit (glutamine amidotransferase) binds and cleaves glutamine to supply the large subunit with the substrate ammonia. This is Carbamoyl phosphate synthase small chain from Vibrio cholerae serotype O1 (strain ATCC 39315 / El Tor Inaba N16961).